We begin with the raw amino-acid sequence, 1365 residues long: Homeotic protein spalt-major (1365 aa).

Disordered regions lie at residues 47 to 194 (SADK…EVTL), 270 to 298 (QAKQ…EEEE), and 322 to 363 (LINA…NTHK). Low complexity-rich tracts occupy residues 63–76 (SPLT…SPSR) and 87–99 (EQST…PEQS). Over residues 103–117 (HQLENDIKSEAKSEI) the composition is skewed to basic and acidic residues. The segment covering 146-157 (PSSPVAEASAEE) has biased composition (low complexity). The span at 159 to 181 (ATERTPEKEKEKDVEVDVEKPDE) shows a compositional bias: basic and acidic residues. A compositionally biased stretch (acidic residues) spans 275–298 (EDTEEDADQEQDQEQETDTYEEEE). Over residues 346 to 363 (HDHESQPNRRPSLDNTHK) the composition is skewed to basic and acidic residues. 2 C2H2-type zinc fingers span residues 451-473 (HRCR…IRSH) and 479-501 (FKCN…FQRH). 2 disordered regions span residues 508 to 554 (VPMN…ASFP) and 586 to 716 (ELPT…TPGQ). A compositionally biased stretch (polar residues) spans 530–539 (MSPTDSSPNH). Over residues 540–554 (SPAPPPLGSAPASFP) the composition is skewed to pro residues. Composition is skewed to basic and acidic residues over residues 603-622 (PQVK…HEQE) and 638-662 (VRIK…EPRR). Phosphoserine is present on residues S739 and S744. A disordered region spans residues 740-772 (PEHHSPVRSPAGGALPPGVPPPPHHHPHHMARS). 3 C2H2-type zinc fingers span residues 824–846 (NQCV…YRTH), 852–874 (FKCR…MAVH), and 884–906 (HQCP…IRLH). 3 disordered regions span residues 948–1012 (ALPG…RSGD), 1030–1129 (VVNT…ILTS), and 1146–1241 (HHLQ…GARP). Residues 976–991 (DMDDNMDCGEDYDDDV) show a composition bias toward acidic residues. Over residues 1040 to 1054 (SSASSHGHSVGSTSA) the composition is skewed to low complexity. Positions 1055–1079 (PTSPSVHASSQVIKRSSSPARSEAS) are enriched in polar residues. Phosphoserine occurs at positions 1076 and 1079. 3 stretches are compositionally biased toward low complexity: residues 1085–1100 (LTPR…SRSP), 1114–1123 (RSPSGSSHAS), and 1146–1168 (HHLQ…AAAA). A compositionally biased stretch (basic and acidic residues) spans 1181-1191 (QHQEQLRREAA). Low complexity predominate over residues 1192–1218 (EAQQKAAAAAAAAAAAAAAQRQTPPQA). 2 consecutive C2H2-type zinc fingers follow at residues 1289 to 1311 (TTCG…YRSH) and 1317 to 1339 (FKCS…MLTH).

Belongs to the sal C2H2-type zinc-finger protein family.

It localises to the nucleus. Required for the establishment of the posterior-most head and the anterior-most tail segments of the embryo. Probably function as a transcriptional regulator. Could repress the transcription of the tsh gene. The chain is Homeotic protein spalt-major (salm) from Drosophila melanogaster (Fruit fly).